We begin with the raw amino-acid sequence, 1376 residues long: DNA-directed RNA polymerase subunit beta (1376 aa).

This sequence belongs to the RNA polymerase beta chain family. As to quaternary structure, the RNAP catalytic core consists of 2 alpha, 1 beta, 1 beta' and 1 omega subunit. When a sigma factor is associated with the core the holoenzyme is formed, which can initiate transcription.

It catalyses the reaction RNA(n) + a ribonucleoside 5'-triphosphate = RNA(n+1) + diphosphate. In terms of biological role, DNA-dependent RNA polymerase catalyzes the transcription of DNA into RNA using the four ribonucleoside triphosphates as substrates. The protein is DNA-directed RNA polymerase subunit beta of Methylorubrum extorquens (strain PA1) (Methylobacterium extorquens).